Here is a 511-residue protein sequence, read N- to C-terminus: GMP synthase [glutamine-hydrolyzing] (511 aa).

The region spanning 5 to 195 (DILVLDFGSQ…AKYACNCESV (191 aa)) is the Glutamine amidotransferase type-1 domain. The active-site Nucleophile is the C82. Catalysis depends on residues H169 and E171. In terms of domain architecture, GMPS ATP-PPase spans 196 to 386 (WNMGSFAKTQ…LGLSKEVVYR (191 aa)). 223–229 (SGGVDSS) is an ATP binding site.

Homodimer.

The enzyme catalyses XMP + L-glutamine + ATP + H2O = GMP + L-glutamate + AMP + diphosphate + 2 H(+). Its pathway is purine metabolism; GMP biosynthesis; GMP from XMP (L-Gln route): step 1/1. Catalyzes the synthesis of GMP from XMP. The chain is GMP synthase [glutamine-hydrolyzing] from Campylobacter jejuni (strain RM1221).